The chain runs to 320 residues: Heterogeneous nuclear ribonucleoprotein A1-like 2 (320 aa).

A globular A domain region spans residues 4-94; the sequence is SASPKEPEQL…EPKRAVSRED (91 aa). Phosphoserine is present on residues Ser6 and Ser22. RRM domains lie at 14 to 97 and 105 to 184; these read RKLF…DSQR and KKIF…LPKQ. The segment at 95–185 is globular B domain; that stretch reads SQRPGAHLTV…EVRKALPKQE (91 aa). A disordered region spans residues 181-216; sequence LPKQEMASASSSQRGRRGSGNFGGGRGDGFGGNDNF. Asymmetric dimethylarginine; alternate is present on residues Arg194, Arg206, Arg218, and Arg225. An omega-N-methylarginine; alternate mark is found at Arg194, Arg206, Arg218, and Arg225. Over residues 198-216 the composition is skewed to gly residues; sequence GSGNFGGGRGDGFGGNDNF. The tract at residues 218–240 is RNA-binding RGG-box; it reads RGGNFSGRGGFGGSCGGGGYGGS. The interval 268 to 305 is nuclear targeting sequence; the sequence is NQSSNFGPMKGGNFGGRSSGPYGGGGQYFAKPQNQGGY. The disordered stretch occupies residues 271–320; the sequence is SNFGPMKGGNFGGRSSGPYGGGGQYFAKPQNQGGYGVSSSSSSYGSGRRF. Residues 276-294 show a composition bias toward gly residues; sequence MKGGNFGGRSSGPYGGGGQ. An Omega-N-methylarginine modification is found at Arg284. Lys298 is modified (N6-acetyllysine). A compositionally biased stretch (low complexity) spans 307–320; it reads VSSSSSSYGSGRRF.

It is found in the nucleus. It localises to the cytoplasm. Functionally, involved in the packaging of pre-mRNA into hnRNP particles, transport of poly(A) mRNA from the nucleus to the cytoplasm and may modulate splice site selection. This is Heterogeneous nuclear ribonucleoprotein A1-like 2 (HNRNPA1L2) from Homo sapiens (Human).